A 128-amino-acid chain; its full sequence is Small ribosomal subunit protein uS12 (128 aa).

The interval 1 to 24 is disordered; it reads MPTFNQLVKYGREKRKKKSKAPAL. At aspartate 89 the chain carries 3-methylthioaspartic acid. The interval 105–128 is disordered; sequence AGVEGRRQSRSKYGTKRPKEEKGG.

The protein belongs to the universal ribosomal protein uS12 family. In terms of assembly, part of the 30S ribosomal subunit. Contacts proteins S8 and S17. May interact with IF1 in the 30S initiation complex.

Functionally, with S4 and S5 plays an important role in translational accuracy. Its function is as follows. Interacts with and stabilizes bases of the 16S rRNA that are involved in tRNA selection in the A site and with the mRNA backbone. Located at the interface of the 30S and 50S subunits, it traverses the body of the 30S subunit contacting proteins on the other side and probably holding the rRNA structure together. The combined cluster of proteins S8, S12 and S17 appears to hold together the shoulder and platform of the 30S subunit. This is Small ribosomal subunit protein uS12 from Aquifex aeolicus (strain VF5).